A 243-amino-acid polypeptide reads, in one-letter code: Methylthioribulose-1-phosphate dehydratase (243 aa).

The interval 1–22 (MCPADQTVATNNNDHLVQSEDP) is disordered. Over residues 7–16 (TVATNNNDHL) the composition is skewed to polar residues. Cys-103 lines the substrate pocket. The Zn(2+) site is built by His-120 and His-122. Glu-149 acts as the Proton donor/acceptor in catalysis. His-205 is a Zn(2+) binding site.

Belongs to the aldolase class II family. MtnB subfamily. Zn(2+) serves as cofactor.

It localises to the cytoplasm. The enzyme catalyses 5-(methylsulfanyl)-D-ribulose 1-phosphate = 5-methylsulfanyl-2,3-dioxopentyl phosphate + H2O. It functions in the pathway amino-acid biosynthesis; L-methionine biosynthesis via salvage pathway; L-methionine from S-methyl-5-thio-alpha-D-ribose 1-phosphate: step 2/6. In terms of biological role, catalyzes the dehydration of methylthioribulose-1-phosphate (MTRu-1-P) into 2,3-diketo-5-methylthiopentyl-1-phosphate (DK-MTP-1-P). This is Methylthioribulose-1-phosphate dehydratase from Penicillium rubens (strain ATCC 28089 / DSM 1075 / NRRL 1951 / Wisconsin 54-1255) (Penicillium chrysogenum).